We begin with the raw amino-acid sequence, 101 residues long: YcgL domain-containing protein ABBFA_001807 (101 aa).

The YcgL domain occupies 1 to 92; that stretch reads MHCDIYRSSK…PPEGLINPNA (92 aa).

The polypeptide is YcgL domain-containing protein ABBFA_001807 (Acinetobacter baumannii (strain AB307-0294)).